A 154-amino-acid chain; its full sequence is uncharacterized protein (154 aa).

It is found in the mitochondrion. This is an uncharacterized protein from Arabidopsis thaliana (Mouse-ear cress).